Consider the following 227-residue polypeptide: 6-phosphogluconolactonase (227 aa).

This sequence belongs to the glucosamine/galactosamine-6-phosphate isomerase family. 6-phosphogluconolactonase subfamily.

It catalyses the reaction 6-phospho-D-glucono-1,5-lactone + H2O = 6-phospho-D-gluconate + H(+). Its pathway is carbohydrate degradation; pentose phosphate pathway; D-ribulose 5-phosphate from D-glucose 6-phosphate (oxidative stage): step 2/3. In terms of biological role, hydrolysis of 6-phosphogluconolactone to 6-phosphogluconate. The chain is 6-phosphogluconolactonase (pgl) from Helicobacter pylori (strain ATCC 700392 / 26695) (Campylobacter pylori).